The sequence spans 78 residues: DNA-directed RNA polymerase subunit omega (78 aa).

It belongs to the RNA polymerase subunit omega family. In terms of assembly, in cyanobacteria the RNAP catalytic core is composed of 2 alpha, 1 beta, 1 beta', 1 gamma and 1 omega subunit. When a sigma factor is associated with the core the holoenzyme is formed, which can initiate transcription.

The enzyme catalyses RNA(n) + a ribonucleoside 5'-triphosphate = RNA(n+1) + diphosphate. Its function is as follows. Promotes RNA polymerase assembly. Latches the N- and C-terminal regions of the beta' subunit thereby facilitating its interaction with the beta and alpha subunits. This Prochlorococcus marinus (strain MIT 9515) protein is DNA-directed RNA polymerase subunit omega.